The chain runs to 199 residues: uncharacterized protein (199 aa).

Helical transmembrane passes span 1–21, 28–48, 51–71, 83–103, 127–147, and 154–174; these read MEQF…TFIF, IAVS…IALY, LNAA…YLGM, LVAA…WFII, QLVL…FVIQ, and AVGG…LFGI.

Its subcellular location is the cell membrane. This is an uncharacterized protein from Bacillus subtilis (strain 168).